A 58-amino-acid polypeptide reads, in one-letter code: MNLLERIKKLPEDWKRIITVAKKPDKDTFSMYLKVTLIVMAFVGLLAYLIQLVLAFII.

Residues 38 to 58 form a helical membrane-spanning segment; sequence IVMAFVGLLAYLIQLVLAFII.

The protein belongs to the SecE/SEC61-gamma family. In terms of assembly, component of the Sec protein translocase complex. Heterotrimer consisting of SecY (alpha), SecG (beta) and SecE (gamma) subunits. The heterotrimers can form oligomers, although 1 heterotrimer is thought to be able to translocate proteins. Interacts with the ribosome. May interact with SecDF, and other proteins may be involved.

The protein localises to the cell membrane. Functionally, essential subunit of the Sec protein translocation channel SecYEG. Clamps together the 2 halves of SecY. May contact the channel plug during translocation. This Acidianus ambivalens (Desulfurolobus ambivalens) protein is Protein translocase subunit SecE.